The following is an 808-amino-acid chain: Quinoprotein glucose dehydrogenase (808 aa).

A signal peptide spans 1-33 (MSTTSRPGLWALITAAVFALCGAILTVGGAWVA). 4 helical membrane passes run 35-54 (IGGP…TAFL), 59-76 (NPAA…TVIW), 94-108 (IVII…PFVS), and 123-138 (GAVG…SLFT). The active-site Proton acceptor is the D470. The tract at residues 514–545 (VPAPETPVPQGAAPGDHTSPTQPMSQLTLRPK) is disordered. A compositionally biased stretch (polar residues) spans 531 to 541 (TSPTQPMSQLT).

Belongs to the bacterial PQQ dehydrogenase family. Pyrroloquinoline quinone serves as cofactor.

It is found in the cell inner membrane. It catalyses the reaction a ubiquinone + D-glucose = D-glucono-1,5-lactone + a ubiquinol. The chain is Quinoprotein glucose dehydrogenase (gdh) from Gluconobacter oxydans (strain 621H) (Gluconobacter suboxydans).